Consider the following 827-residue polypeptide: Zinc phosphodiesterase ELAC protein 2 (827 aa).

Residues 1-16 (MWALRSLLRPLGLRTM) constitute a mitochondrion transit peptide. 2 disordered regions span residues 15 to 46 (TMSQGSARRPRPPKDPLRHLRTREKRGPGWGP) and 181 to 220 (SERRCGEQEPSRSPKRSPNRLSPKQSSSDPGSAENGQCLP). Residues 181-192 (SERRCGEQEPSR) are compositionally biased toward basic and acidic residues. Residues Ser-193, Ser-197, Ser-202, Ser-207, Ser-617, and Ser-735 each carry the phosphoserine modification. Polar residues predominate over residues 199-210 (NRLSPKQSSSDP). The disordered stretch occupies residues 794-827 (LTQQADSSEDREPHQKRAHSEEPHSPQSKKVRAQ). Residue Thr-795 is modified to Phosphothreonine. Ser-800 carries the phosphoserine modification. A compositionally biased stretch (basic and acidic residues) spans 801–817 (SEDREPHQKRAHSEEPH). A Phosphoserine modification is found at Ser-818.

The protein belongs to the RNase Z family. Homodimer. Interacts with PTCD1. Zn(2+) serves as cofactor.

It is found in the mitochondrion. The protein resides in the mitochondrion matrix. Its subcellular location is the mitochondrion nucleoid. The protein localises to the nucleus. The catalysed reaction is Endonucleolytic cleavage of RNA, removing extra 3' nucleotides from tRNA precursor, generating 3' termini of tRNAs. A 3'-hydroxy group is left at the tRNA terminus and a 5'-phosphoryl group is left at the trailer molecule.. Functionally, zinc phosphodiesterase, which displays mitochondrial tRNA 3'-processing endonuclease activity. Involved in tRNA maturation, by removing a 3'-trailer from precursor tRNA. Associates with mitochondrial DNA complexes at the nucleoids to initiate RNA processing and ribosome assembly. The protein is Zinc phosphodiesterase ELAC protein 2 (Elac2) of Rattus norvegicus (Rat).